A 136-amino-acid chain; its full sequence is Large ribosomal subunit protein uL16 (136 aa).

It belongs to the universal ribosomal protein uL16 family. In terms of assembly, part of the 50S ribosomal subunit.

Functionally, binds 23S rRNA and is also seen to make contacts with the A and possibly P site tRNAs. The chain is Large ribosomal subunit protein uL16 from Wigglesworthia glossinidia brevipalpis.